The primary structure comprises 360 residues: Phospho-N-acetylmuramoyl-pentapeptide-transferase (360 aa).

10 consecutive transmembrane segments (helical) span residues 25-45 (RGIL…PWMI), 73-93 (TMGG…WADL), 97-117 (YVWV…VDDY), 135-155 (FWQS…APSA), 170-190 (IPLG…SSNA), 199-219 (GLAI…CYLS), 236-256 (AGEL…FLWF), 263-283 (VFMG…MAVI), 288-308 (IVLF…VIQV), and 338-358 (VIVR…ATLK).

It belongs to the glycosyltransferase 4 family. MraY subfamily. Requires Mg(2+) as cofactor.

The protein resides in the cell inner membrane. It carries out the reaction UDP-N-acetyl-alpha-D-muramoyl-L-alanyl-gamma-D-glutamyl-meso-2,6-diaminopimeloyl-D-alanyl-D-alanine + di-trans,octa-cis-undecaprenyl phosphate = di-trans,octa-cis-undecaprenyl diphospho-N-acetyl-alpha-D-muramoyl-L-alanyl-D-glutamyl-meso-2,6-diaminopimeloyl-D-alanyl-D-alanine + UMP. It functions in the pathway cell wall biogenesis; peptidoglycan biosynthesis. Catalyzes the initial step of the lipid cycle reactions in the biosynthesis of the cell wall peptidoglycan: transfers peptidoglycan precursor phospho-MurNAc-pentapeptide from UDP-MurNAc-pentapeptide onto the lipid carrier undecaprenyl phosphate, yielding undecaprenyl-pyrophosphoryl-MurNAc-pentapeptide, known as lipid I. In Pseudomonas savastanoi pv. phaseolicola (strain 1448A / Race 6) (Pseudomonas syringae pv. phaseolicola (strain 1448A / Race 6)), this protein is Phospho-N-acetylmuramoyl-pentapeptide-transferase.